The following is a 569-amino-acid chain: Putative ABC transporter ATP-binding protein TTE1589 (569 aa).

ABC transporter domains follow at residues 8–248 (IIVK…IGLM) and 309–542 (IQAK…LSLK). Residues 43–50 (GPSGAGKS) and 342–349 (GHNGSGKT) each bind ATP.

Belongs to the ABC transporter superfamily.

Its subcellular location is the cell membrane. In terms of biological role, probably part of an ABC transporter complex. Responsible for energy coupling to the transport system. This chain is Putative ABC transporter ATP-binding protein TTE1589, found in Caldanaerobacter subterraneus subsp. tengcongensis (strain DSM 15242 / JCM 11007 / NBRC 100824 / MB4) (Thermoanaerobacter tengcongensis).